Reading from the N-terminus, the 185-residue chain is Acireductone dioxygenase (185 aa).

Fe(2+) is bound by residues His-97, His-99, Glu-103, and His-141. Ni(2+) contacts are provided by His-97, His-99, Glu-103, and His-141.

It belongs to the acireductone dioxygenase (ARD) family. As to quaternary structure, monomer. Requires Fe(2+) as cofactor. Ni(2+) serves as cofactor.

It carries out the reaction 1,2-dihydroxy-5-(methylsulfanyl)pent-1-en-3-one + O2 = 3-(methylsulfanyl)propanoate + CO + formate + 2 H(+). The catalysed reaction is 1,2-dihydroxy-5-(methylsulfanyl)pent-1-en-3-one + O2 = 4-methylsulfanyl-2-oxobutanoate + formate + 2 H(+). It participates in amino-acid biosynthesis; L-methionine biosynthesis via salvage pathway; L-methionine from S-methyl-5-thio-alpha-D-ribose 1-phosphate: step 5/6. Functionally, catalyzes 2 different reactions between oxygen and the acireductone 1,2-dihydroxy-3-keto-5-methylthiopentene (DHK-MTPene) depending upon the metal bound in the active site. Fe-containing acireductone dioxygenase (Fe-ARD) produces formate and 2-keto-4-methylthiobutyrate (KMTB), the alpha-ketoacid precursor of methionine in the methionine recycle pathway. Ni-containing acireductone dioxygenase (Ni-ARD) produces methylthiopropionate, carbon monoxide and formate, and does not lie on the methionine recycle pathway. In Stenotrophomonas maltophilia (strain K279a), this protein is Acireductone dioxygenase.